An 824-amino-acid polypeptide reads, in one-letter code: Glycerol-3-phosphate acyltransferase (824 aa).

The HXXXXD motif signature appears at 302-307 (CHRSHM).

Belongs to the GPAT/DAPAT family.

Its subcellular location is the cell inner membrane. It catalyses the reaction sn-glycerol 3-phosphate + an acyl-CoA = a 1-acyl-sn-glycero-3-phosphate + CoA. It participates in phospholipid metabolism; CDP-diacylglycerol biosynthesis; CDP-diacylglycerol from sn-glycerol 3-phosphate: step 1/3. The chain is Glycerol-3-phosphate acyltransferase from Actinobacillus pleuropneumoniae serotype 3 (strain JL03).